A 348-amino-acid polypeptide reads, in one-letter code: N-formyl peptide receptor 2 (348 aa).

Asn-1 carries an N-linked (GlcNAc...) asparagine glycan. At 1–24 (NFSTPLNEYEEGSYESAGYTVLRI) the chain is on the extracellular side. A helical membrane pass occupies residues 25–47 (LPLVVLGVTFVLGVLGNGLVIWV). Over 48 to 58 (AGFRMTRTVTT) the chain is Cytoplasmic. Residues 59-80 (ICYLNLALADFSFTATLPFLIV) form a helical membrane-spanning segment. Residues 81–97 (SMAMGEKWPFGWFLCKL) lie on the Extracellular side of the membrane. A disulfide bond links Cys-95 and Cys-173. A helical membrane pass occupies residues 98 to 118 (IHIVVDINLFGSVFLIGFIAL). At 119-137 (DRCICVLHPVWAQNHRTVS) the chain is on the cytoplasmic side. The helical transmembrane segment at 138 to 159 (LAMKVIVGPWILALVLTLPVFL) threads the bilayer. Residues 160 to 202 (FLTTVTIPNGDTYCTFNFASWGGTPEERLKVAITLLTARGIIR) are Extracellular-facing. A helical transmembrane segment spans residues 203–223 (FVIGFSLPMSIVAICYGLIAA). The Cytoplasmic portion of the chain corresponds to 224-239 (KIHKKGMIKSSRPLRV). The chain crosses the membrane as a helical span at residues 240–263 (LTAVVASFFICWFPFQLVALLGTV). At 264-283 (WLKEMLFYGKYKIIDILVNP) the chain is on the extracellular side. The helical transmembrane segment at 284–303 (TSSLAFFNCCLNPMLYVFVG) threads the bilayer. Topologically, residues 304 to 348 (QDFRERLIHSLPTSLERALSEDSAPTNDTAANCASPPAETELQAM) are cytoplasmic. Residues 322 to 348 (LSEDSAPTNDTAANCASPPAETELQAM) form a disordered region. The span at 326 to 335 (SAPTNDTAAN) shows a compositional bias: polar residues.

It belongs to the G-protein coupled receptor 1 family. Interacts with Amyloid-beta protein 42, product of APP; the interaction takes place at the cell surface and the complex is then rapidly internalized.

It localises to the cell membrane. In terms of biological role, low affinity receptor for N-formyl-methionyl peptides, which are powerful neutrophil chemotactic factors. Binding of FMLP to the receptor causes activation of neutrophils. This response is mediated via a G-protein that activates a phosphatidylinositol-calcium second messenger system. Receptor for the chemokine-like protein FAM19A5, mediating FAM19A5-stimulated macrophage chemotaxis and the inhibitory effect on TNFSF11/RANKL-induced osteoclast differentiation. The chain is N-formyl peptide receptor 2 (FPR2) from Pan troglodytes (Chimpanzee).